A 141-amino-acid polypeptide reads, in one-letter code: Nucleoside diphosphate kinase (141 aa).

ATP contacts are provided by K11, F59, R87, T93, R104, and N114. H117 functions as the Pros-phosphohistidine intermediate in the catalytic mechanism.

Belongs to the NDK family. In terms of assembly, homotetramer. The cofactor is Mg(2+).

The protein resides in the cytoplasm. The catalysed reaction is a 2'-deoxyribonucleoside 5'-diphosphate + ATP = a 2'-deoxyribonucleoside 5'-triphosphate + ADP. It catalyses the reaction a ribonucleoside 5'-diphosphate + ATP = a ribonucleoside 5'-triphosphate + ADP. Major role in the synthesis of nucleoside triphosphates other than ATP. The ATP gamma phosphate is transferred to the NDP beta phosphate via a ping-pong mechanism, using a phosphorylated active-site intermediate. This is Nucleoside diphosphate kinase from Vibrio vulnificus (strain CMCP6).